The following is a 172-amino-acid chain: Keratin, high-sulfur matrix protein, B2A (172 aa).

An N-acetylalanine modification is found at Ala2. 5 repeats span residues 27-36 (PTCCQTSCCQ), 37-46 (PTSIQTSCCQ), 47-56 (PISIQTSCCQ), 57-66 (PTSIQTSCCQ), and 67-76 (PTCLQTSGCE).

Its function is as follows. The keratin products of mammalian epidermal derivatives such as wool and hair consist of microfibrils embedded in a rigid matrix of other proteins. The matrix proteins include the high-sulfur and high-tyrosine keratins, having molecular weights of 6-20 kDa, whereas the microfibrils contain the larger, low-sulfur keratins (40-56 kDa). In Ovis aries (Sheep), this protein is Keratin, high-sulfur matrix protein, B2A.